Here is a 164-residue protein sequence, read N- to C-terminus: Cytochrome c-type biogenesis protein CcmE (164 aa).

Residues Met1–Arg7 are Cytoplasmic-facing. Residues Leu8 to Ala28 form a helical; Signal-anchor for type II membrane protein membrane-spanning segment. Over Met29–Arg164 the chain is Periplasmic. Heme is bound by residues His122 and Tyr126. Basic and acidic residues predominate over residues Lys137–Pro149. A disordered region spans residues Lys137–Arg164. Residues Pro153–Arg164 are compositionally biased toward low complexity.

The protein belongs to the CcmE/CycJ family.

It localises to the cell inner membrane. Functionally, heme chaperone required for the biogenesis of c-type cytochromes. Transiently binds heme delivered by CcmC and transfers the heme to apo-cytochromes in a process facilitated by CcmF and CcmH. The sequence is that of Cytochrome c-type biogenesis protein CcmE from Rhodopseudomonas palustris (strain BisB5).